We begin with the raw amino-acid sequence, 403 residues long: Forkhead box protein Q1 (403 aa).

2 disordered regions span residues 1–75 (MKLE…PGAE) and 94–116 (GAAGPGAGGAGSGEGARSKPYTR). The segment covering 32–48 (LSAAGDDSLGSDGDCAA) has biased composition (low complexity). A compositionally biased stretch (gly residues) spans 96-107 (AGPGAGGAGSGE). The segment at residues 119–214 (KPPYSYIALI…ADGVFRRRRK (96 aa)) is a DNA-binding region (fork-head). A disordered region spans residues 216–266 (LSHRAPVPAPGLRPEEAPGLPAAPPPAPAAPASPRMRSPARQEERASPAGK). Pro residues predominate over residues 236-246 (PAAPPPAPAAP).

In terms of tissue distribution, expressed predominantly in the stomach, trachea, bladder and salivary gland.

Its subcellular location is the nucleus. Plays a role in hair follicle differentiation. The chain is Forkhead box protein Q1 (FOXQ1) from Homo sapiens (Human).